Consider the following 96-residue polypeptide: Integration host factor subunit beta (96 aa).

This sequence belongs to the bacterial histone-like protein family. In terms of assembly, heterodimer of an alpha and a beta chain.

Its function is as follows. This protein is one of the two subunits of integration host factor, a specific DNA-binding protein that functions in genetic recombination as well as in transcriptional and translational control. In Dichelobacter nodosus (strain VCS1703A), this protein is Integration host factor subunit beta.